A 208-amino-acid chain; its full sequence is uncharacterized protein (208 aa).

The span at 118–134 (QYPNQYQQQPQQQQPGY) shows a compositional bias: low complexity. Residues 118-208 (QYPNQYQQQP…HKKEKNEIKE (91 aa)) form a disordered region. Residues 138-175 (NYNQPPVQLNKQAYDNYQQNDYKSNNQPNLAKENNISN) show a composition bias toward polar residues. Basic residues predominate over residues 187-201 (KKEKKHSFFSKLHKK).

This is an uncharacterized protein from Dictyostelium discoideum (Social amoeba).